The primary structure comprises 422 residues: Elongation factor 1-alpha (422 aa).

The tr-type G domain occupies 5–221 (KPHMNLAVIG…DELKEPEKPS (217 aa)). The tract at residues 14–21 (GHIDHGKS) is G1. 14–21 (GHIDHGKS) contacts GTP. Position 21 (serine 21) interacts with Mg(2+). A G2 region spans residues 70–74 (GITID). Residues 91-94 (DCPG) are G3. GTP is bound by residues 91–95 (DCPGH) and 146–149 (NKMD). The segment at 146-149 (NKMD) is G4. The interval 185-187 (SAF) is G5.

The protein belongs to the TRAFAC class translation factor GTPase superfamily. Classic translation factor GTPase family. EF-Tu/EF-1A subfamily.

The protein resides in the cytoplasm. It carries out the reaction GTP + H2O = GDP + phosphate + H(+). In terms of biological role, GTP hydrolase that promotes the GTP-dependent binding of aminoacyl-tRNA to the A-site of ribosomes during protein biosynthesis. The sequence is that of Elongation factor 1-alpha from Methanosarcina acetivorans (strain ATCC 35395 / DSM 2834 / JCM 12185 / C2A).